Here is a 363-residue protein sequence, read N- to C-terminus: Aminomethyltransferase (363 aa).

It belongs to the GcvT family. As to quaternary structure, the glycine cleavage system is composed of four proteins: P, T, L and H.

It carries out the reaction N(6)-[(R)-S(8)-aminomethyldihydrolipoyl]-L-lysyl-[protein] + (6S)-5,6,7,8-tetrahydrofolate = N(6)-[(R)-dihydrolipoyl]-L-lysyl-[protein] + (6R)-5,10-methylene-5,6,7,8-tetrahydrofolate + NH4(+). Its function is as follows. The glycine cleavage system catalyzes the degradation of glycine. In Staphylococcus haemolyticus (strain JCSC1435), this protein is Aminomethyltransferase.